Here is a 327-residue protein sequence, read N- to C-terminus: Lipoyl synthase (327 aa).

C66, C71, C77, C92, C96, C99, and S306 together coordinate [4Fe-4S] cluster. The 218-residue stretch at 78–295 (FSKGTATFMI…EKEAYELGFS (218 aa)) folds into the Radical SAM core domain.

Belongs to the radical SAM superfamily. Lipoyl synthase family. Requires [4Fe-4S] cluster as cofactor.

It localises to the cytoplasm. It catalyses the reaction [[Fe-S] cluster scaffold protein carrying a second [4Fe-4S](2+) cluster] + N(6)-octanoyl-L-lysyl-[protein] + 2 oxidized [2Fe-2S]-[ferredoxin] + 2 S-adenosyl-L-methionine + 4 H(+) = [[Fe-S] cluster scaffold protein] + N(6)-[(R)-dihydrolipoyl]-L-lysyl-[protein] + 4 Fe(3+) + 2 hydrogen sulfide + 2 5'-deoxyadenosine + 2 L-methionine + 2 reduced [2Fe-2S]-[ferredoxin]. Its pathway is protein modification; protein lipoylation via endogenous pathway; protein N(6)-(lipoyl)lysine from octanoyl-[acyl-carrier-protein]: step 2/2. In terms of biological role, catalyzes the radical-mediated insertion of two sulfur atoms into the C-6 and C-8 positions of the octanoyl moiety bound to the lipoyl domains of lipoate-dependent enzymes, thereby converting the octanoylated domains into lipoylated derivatives. This chain is Lipoyl synthase, found in Neisseria meningitidis serogroup B (strain ATCC BAA-335 / MC58).